A 170-amino-acid chain; its full sequence is Adenine phosphoribosyltransferase (170 aa).

Belongs to the purine/pyrimidine phosphoribosyltransferase family. As to quaternary structure, homodimer.

It is found in the cytoplasm. The catalysed reaction is AMP + diphosphate = 5-phospho-alpha-D-ribose 1-diphosphate + adenine. The protein operates within purine metabolism; AMP biosynthesis via salvage pathway; AMP from adenine: step 1/1. Its function is as follows. Catalyzes a salvage reaction resulting in the formation of AMP, that is energically less costly than de novo synthesis. This chain is Adenine phosphoribosyltransferase, found in Prochlorococcus marinus (strain MIT 9312).